Here is a 449-residue protein sequence, read N- to C-terminus: Glycosyl hydrolase-like protein 1 (449 aa).

Residues Q22, H119, N164–E165, Y292, E350, W393, and Y406 contribute to the a beta-D-glucoside site. The active-site Proton donor is the E165. E350 (nucleophile) is an active-site residue.

The protein belongs to the glycosyl hydrolase 1 family. In terms of tissue distribution, mainly expressed in flowers, flower buds and young leaves, and, to a lesser extent, in old leaves, stems and roots.

It localises to the cytoplasm. The protein operates within secondary metabolite biosynthesis; terpenoid biosynthesis. Its function is as follows. Component of the oleanane-type triterpene saponins (e.g. saponarioside A and saponarioside B) biosynthetic pathway, leading to the production of natural products with detergent properties used as traditional sources of soap. Beta-glycosidase that catalyzes the transfer of glucose moiety to QA-triFRXX to produce QA-triF(Q)RXX via the elongation of the C-28 sugar chain with a D-quinovose. The sequence is that of Glycosyl hydrolase-like protein 1 from Saponaria officinalis (Common soapwort).